Reading from the N-terminus, the 337-residue chain is G-protein coupled receptor 65 (337 aa).

Residues 1–5 (MNSTC) lie on the Extracellular side of the membrane. N-linked (GlcNAc...) asparagine glycosylation occurs at Asn-2. 2 disulfides stabilise this stretch: Cys-5–Cys-160 and Cys-87–Cys-170. A helical membrane pass occupies residues 6–42 (IEEQHDLDHYLFPIVYIFVIIVSIPANIGSLCVSFLQ). At 43 to 46 (AKKE) the chain is on the cytoplasmic side. A helical membrane pass occupies residues 47–77 (SELGIYLFSLSLSDLLYALTLPLWIDYTWNK). At 78–82 (DNWTF) the chain is on the extracellular side. A glycan (N-linked (GlcNAc...) asparagine) is linked at Asn-79. The chain crosses the membrane as a helical span at residues 83–118 (SPALCKGSAFLMYMNFYSSTAFLTCIAVDRYLAVVY). Over 119–126 (PLKFFFLR) the chain is Cytoplasmic. A helical transmembrane segment spans residues 127-153 (TRRFALMVSLSIWILETIFNAVMLWED). Over 154 to 174 (ETVVEYCDAEKSNFTLCYDKY) the chain is Extracellular. Residues 154–174 (ETVVEYCDAEKSNFTLCYDKY) form an extracellular loop 2 (ECL2) region. Asn-166 is a glycosylation site (N-linked (GlcNAc...) asparagine). The chain crosses the membrane as a helical span at residues 175–212 (PLEKWQINLNLFRTCTGYAIPLVTILICNRKVYQAVRH). Residues 213–216 (NKAT) are Cytoplasmic-facing. The helical transmembrane segment at 217–252 (ENKEKKRIIKLLVSITVTFVLCFTPFHVMLLIRCIL) threads the bilayer. Over 253–264 (EHAVNFEDHSNS) the chain is Extracellular. Residues 265 to 293 (GKRTYTMYRITVALTSLNCVADPILYCFV) form a helical membrane-spanning segment. Over 294 to 337 (TETGRYDMWNILKFCTGRCNTSQRQRKRILSVSTKDTMELEVLE) the chain is Cytoplasmic.

Belongs to the G-protein coupled receptor 1 family. Predominantly expressed in thymus, spleen, lymph nodes, small intestine, lung, placenta and peripheral blood leukocytes.

It is found in the cell membrane. It localises to the early endosome membrane. Its subcellular location is the late endosome membrane. Its activity is regulated as follows. Activated by a network of residues that connects an extracellular-facing cavity to Glu-142, a conserved charged residue buried in the transmembrane core of the receptor. Protonation likely drives conformational changes in extracellular loop 2 (ECL2), which stabilizes movement of transmembrane 3 (TM3) and a series of rearrangements that connect the extracellular-facing cavity to Glu-142, a residue only conserved in proton-sensing G-protein coupled receptors. Activated by BTB09089, a positive allosteric modulator. Proton-sensing G-protein coupled receptor activated by extracellular pH, which is required to monitor pH changes and generate adaptive reactions. Activated by an optimal pH of 7.4. Ligand binding causes a conformation change that triggers signaling via guanine nucleotide-binding proteins (G proteins) and modulates the activity of downstream effectors, such as adenylate cyclase. GPR65 is mainly coupled to G(s) G proteins and mediates activation of adenylate cyclase activity. May also act as a receptor for the glycosphingolipid psychosine (PSY) and several related glycosphingolipids. Plays a role in immune response by maintaining lysosome function and regulating T-cell metabolism. Acts as a regulator of inflammation by mediating pH-sensing of extracellular acidification which takes place in inflamed tissues: activation regulates endo-lysosomal function of immune cells and T-cell metabolism. Constitutively active in endosomes and stimulates adenylate cyclase production from endosomes independently from extracellular pH changes. This Homo sapiens (Human) protein is G-protein coupled receptor 65.